Reading from the N-terminus, the 357-residue chain is MKKYKIIMTGGGSAGHVTPNLALVPKLKELGFEIKYIGSKNGIEKEIITKENIPYYSISSGKLRRYFDIKNFTDPFKVLKGVMDASRILSKEKPDVIFSKGGFVTVPVVIAASMKKIPVVSHESDLTPGLANKIASPFCDTLCVTFPESLKYIKDNKGELTGTPIREDLLKGDKERGRKFCNFKENKKVLMIIGGSLGSKVINESVRKILNEILKEYNVIHLCGKGNLDESLKNLDGYRQYEYISEELPDLMALADLVISRAGANTIFELLALRKLNILIPLSANASRGDQVLNANSFEKSGYSMVIKEEELNSELLLKSIKDLEKNREKYLNSMKMSKIGNGVNNIIDIIKKSAHM.

UDP-N-acetyl-alpha-D-glucosamine is bound by residues 13 to 15 (SAG), Arg166, Ser196, and Gln291.

This sequence belongs to the glycosyltransferase 28 family. MurG subfamily.

The protein localises to the cell membrane. It catalyses the reaction di-trans,octa-cis-undecaprenyl diphospho-N-acetyl-alpha-D-muramoyl-L-alanyl-D-glutamyl-meso-2,6-diaminopimeloyl-D-alanyl-D-alanine + UDP-N-acetyl-alpha-D-glucosamine = di-trans,octa-cis-undecaprenyl diphospho-[N-acetyl-alpha-D-glucosaminyl-(1-&gt;4)]-N-acetyl-alpha-D-muramoyl-L-alanyl-D-glutamyl-meso-2,6-diaminopimeloyl-D-alanyl-D-alanine + UDP + H(+). It functions in the pathway cell wall biogenesis; peptidoglycan biosynthesis. Functionally, cell wall formation. Catalyzes the transfer of a GlcNAc subunit on undecaprenyl-pyrophosphoryl-MurNAc-pentapeptide (lipid intermediate I) to form undecaprenyl-pyrophosphoryl-MurNAc-(pentapeptide)GlcNAc (lipid intermediate II). The sequence is that of UDP-N-acetylglucosamine--N-acetylmuramyl-(pentapeptide) pyrophosphoryl-undecaprenol N-acetylglucosamine transferase from Clostridium perfringens (strain ATCC 13124 / DSM 756 / JCM 1290 / NCIMB 6125 / NCTC 8237 / Type A).